Reading from the N-terminus, the 113-residue chain is MALEAQMTLRMFVLVAMASTVHVLSSSFSEDLGTVPLSKVFRSETRFTLIQSLRALLSRQLEAEVHQPEIGHPGFSDETSSRTGKRGGLGRCIHNCMNSRGGLNFIQCKTMCS.

A signal peptide spans 1 to 21 (MALEAQMTLRMFVLVAMASTV). A propeptide spanning residues 22–86 (HVLSSSFSED…DETSSRTGKR (65 aa)) is cleaved from the precursor.

Belongs to the teretoxin N (TN) superfamily. Contains 2 disulfide bonds. Expressed by the venom duct.

It is found in the secreted. This Terebra anilis (Auger snail) protein is Teretoxin Tan14.1.